We begin with the raw amino-acid sequence, 600 residues long: Brain-enriched guanylate kinase-associated protein (600 aa).

Met1 is modified (N-acetylmethionine). Phosphotyrosine is present on Tyr137. Residues 192-222 form a disordered region; the sequence is PGSLSSRMSDASARDLGYRDGVEKSGPRPPY. Ser200 is subject to Phosphoserine. Residues 203-217 show a composition bias toward basic and acidic residues; that stretch reads SARDLGYRDGVEKSG. Phosphoserine occurs at positions 229 and 246. Thr249 carries the phosphothreonine modification. Position 265 is a phosphoserine (Ser265). Residues 298–317 form a disordered region; the sequence is SSYSSFSATSEEKEHAQAGT. A Phosphoserine modification is found at Ser372. Arg380 is subject to Asymmetric dimethylarginine. A phosphoserine mark is found at Ser463, Ser473, Ser483, Ser485, Ser508, Ser510, and Ser514. The interval 537 to 590 is disordered; it reads GAGSSPEPEHGSRESLEPSSMEASPEMHPPTRLSPQQAFPRTGGSGLSRKDSLT. Positions 543–552 are enriched in basic and acidic residues; that stretch reads EPEHGSRESL. Ser560 and Ser570 each carry phosphoserine.

Interacts with DLG4 and DLGAP1 and forms a ternary complex.

Its subcellular location is the cytoplasm. It localises to the membrane. In terms of biological role, may sustain the structure of the postsynaptic density (PSD). This Mus musculus (Mouse) protein is Brain-enriched guanylate kinase-associated protein (Begain).